A 192-amino-acid chain; its full sequence is uncharacterized protein (192 aa).

Positions 29-160 (HRQAAVLIPI…PLDIYRRGDS (132 aa)) constitute a Nudix hydrolase domain. Residues 67-89 (GAVDDTDASVIAAALREAEEEVA) carry the Nudix box motif. Mg(2+) is bound by residues Glu83 and Glu87.

The protein belongs to the Nudix hydrolase family. PCD1 subfamily. Mn(2+) is required as a cofactor. The cofactor is Mg(2+).

Functionally, probably mediates the hydrolysis of some nucleoside diphosphate derivatives. This is an uncharacterized protein from Escherichia coli (strain SMS-3-5 / SECEC).